A 403-amino-acid polypeptide reads, in one-letter code: Tripartite motif-containing protein 59 (403 aa).

The segment at 10-60 adopts an RING-type zinc-finger fold; that stretch reads CPICYSIFEDPRVLPCSHTFCRNCLENILQASGNFYIWRPLRIPLKCPNCR. Residues 92–134 form a B box-type zinc finger; that stretch reads PDIVTCPEHYRQPLNVYCLLDKKLVCGHCLTIGQHHGHPIDDL. Zn(2+) is bound by residues Cys97, His100, Cys120, and His126. The stretch at 163–246 forms a coiled coil; sequence LIEKLKEQKS…ALTISLQEES (84 aa). Residues 329–349 form a helical membrane-spanning segment; sequence ILNIVVVTLISVILMSILFFN.

The protein belongs to the TRIM/RBCC family. As to quaternary structure, interacts with ECSIT.

It is found in the endoplasmic reticulum membrane. It carries out the reaction S-ubiquitinyl-[E2 ubiquitin-conjugating enzyme]-L-cysteine + [acceptor protein]-L-lysine = [E2 ubiquitin-conjugating enzyme]-L-cysteine + N(6)-ubiquitinyl-[acceptor protein]-L-lysine.. The protein operates within protein modification; protein ubiquitination. Functionally, E3 ubiquitin ligase involved in different processes such as development and immune response. Serves as a negative regulator for innate immune signaling pathways by suppressing RLR-induced activation of IRF3/7 and NF-kappa-B via interaction with adapter ECSIT. Regulates autophagy through modulating both the transcription and the ubiquitination of BECN1. On the one hand, regulates the transcription of BECN1 through negatively modulating the NF-kappa-B pathway. On the other hand, regulates TRAF6-mediated 'Lys-63'-linked ubiquitination of BECN1, thus affecting the formation of the BECN1-PIK3C3 complex. In addition, mediates 'Lys-48'-linked ubiquitination of TRAF6 and thereby promotes TRAF6 proteasomal degradation. Also acts as a critical regulator for early embryo development from blastocyst stage to gastrula through modulating F-actin assembly and WASH1 'Lys-63'-linked ubiquitination. This chain is Tripartite motif-containing protein 59 (TRIM59), found in Homo sapiens (Human).